The primary structure comprises 646 residues: Type III restriction-modification enzyme EcoPI Mod subunit (646 aa).

The segment at 123-126 (DPPY) is binding of S-adenosyl methionine.

It belongs to the N(4)/N(6)-methyltransferase family. Homodimer. A heterotetramer with stoichiometry Res(2)Mod(2).

The catalysed reaction is a 2'-deoxyadenosine in DNA + S-adenosyl-L-methionine = an N(6)-methyl-2'-deoxyadenosine in DNA + S-adenosyl-L-homocysteine + H(+). In terms of biological role, a beta subtype methylase that binds the system-specific DNA recognition site 5'-AGACC-3' and methylates A-3 (of only 1 strand as the other does not have an A residue). DNA restriction requires both the Res and Mod subunits. The sequence is that of Type III restriction-modification enzyme EcoPI Mod subunit from Enterobacteriaceae (Bacteriophage P1).